The primary structure comprises 216 residues: ATP-dependent Clp protease proteolytic subunit (216 aa).

Ser101 functions as the Nucleophile in the catalytic mechanism. His126 is an active-site residue.

It belongs to the peptidase S14 family. As to quaternary structure, component of the chloroplastic Clp protease core complex.

It is found in the plastid. The protein localises to the chloroplast stroma. The catalysed reaction is Hydrolysis of proteins to small peptides in the presence of ATP and magnesium. alpha-casein is the usual test substrate. In the absence of ATP, only oligopeptides shorter than five residues are hydrolyzed (such as succinyl-Leu-Tyr-|-NHMec, and Leu-Tyr-Leu-|-Tyr-Trp, in which cleavage of the -Tyr-|-Leu- and -Tyr-|-Trp bonds also occurs).. Cleaves peptides in various proteins in a process that requires ATP hydrolysis. Has a chymotrypsin-like activity. Plays a major role in the degradation of misfolded proteins. The chain is ATP-dependent Clp protease proteolytic subunit from Zea mays (Maize).